The chain runs to 321 residues: MERMLLLSPPSLAARPERLNTILSSHSRYATDLQMLDRVAAGLVSLPQSTYDIVMLLTDVDGLGTGSTSAMGRGVIQSVVRALRPGGKFKRENGTFTSTECPDNTELMLAGLVFDDTGGLLKPDFGPENIVPLKLGKRKPVHSVSSNGTGTSGPHVNMQLSTGSMLKGQTTTIKGVGFVDFTDDPSLSEADIYSGQTDDELIDEETLLDGEDMGRPIIQPPECRPKAGKRRRACKDCTCGLAERLREEDKAARAKADATLETMKLAPKELAEVDFTVQGKLGSCGNCALGDAFRCDGCPYIGLPPFKPGEEVRLLSNDVQL.

The interval 1 to 131 is N-terminal SAM-like domain; that stretch reads MERMLLLSPP…KPDFGPENIV (131 aa). Positions 132-213 are linker; the sequence is PLKLGKRKPV…EETLLDGEDM (82 aa). Residues C223, C234, C237, and C239 each coordinate [2Fe-2S] cluster. Residues 223–239 are fe-S binding site A; the sequence is CRPKAGKRRRACKDCTC. Residues C284, C287, C295, and C298 each contribute to the [4Fe-4S] cluster site. 2 consecutive short sequence motifs (cx2C motif) follow at residues 284-287 and 295-298; these read CGNC and CDGC. The segment at 284-298 is fe-S binding site B; sequence CGNCALGDAFRCDGC.

This sequence belongs to the anamorsin family. In terms of assembly, monomer. Interacts with TAH18. Interacts with MIA40. It depends on [2Fe-2S] cluster as a cofactor. [4Fe-4S] cluster is required as a cofactor.

The protein localises to the cytoplasm. Its subcellular location is the mitochondrion intermembrane space. Functionally, component of the cytosolic iron-sulfur (Fe-S) protein assembly (CIA) machinery required for the maturation of extramitochondrial Fe-S proteins. Part of an electron transfer chain functioning in an early step of cytosolic Fe-S biogenesis, facilitating the de novo assembly of a [4Fe-4S] cluster on the scaffold complex CFD1-NBP35. Electrons are transferred to DRE2 from NADPH via the FAD- and FMN-containing protein TAH18. TAH18-DRE2 are also required for the assembly of the diferric tyrosyl radical cofactor of ribonucleotide reductase (RNR), probably by providing electrons for reduction during radical cofactor maturation in the catalytic small subunit RNR2. The chain is Fe-S cluster assembly protein DRE2 from Coccidioides immitis (strain RS) (Valley fever fungus).